The sequence spans 243 residues: uncharacterized protein (243 aa).

Positions 157-181 (SEETKEQPDATTSEKSRSPECPKTT) are disordered.

This is an uncharacterized protein from Rattus norvegicus (Rat).